Here is a 150-residue protein sequence, read N- to C-terminus: D-aminoacyl-tRNA deacylase (150 aa).

The Gly-cisPro motif, important for rejection of L-amino acids motif lies at G138–P139.

Belongs to the DTD family. In terms of assembly, homodimer.

The protein localises to the cytoplasm. It catalyses the reaction glycyl-tRNA(Ala) + H2O = tRNA(Ala) + glycine + H(+). The enzyme catalyses a D-aminoacyl-tRNA + H2O = a tRNA + a D-alpha-amino acid + H(+). Functionally, an aminoacyl-tRNA editing enzyme that deacylates mischarged D-aminoacyl-tRNAs. Also deacylates mischarged glycyl-tRNA(Ala), protecting cells against glycine mischarging by AlaRS. Acts via tRNA-based rather than protein-based catalysis; rejects L-amino acids rather than detecting D-amino acids in the active site. By recycling D-aminoacyl-tRNA to D-amino acids and free tRNA molecules, this enzyme counteracts the toxicity associated with the formation of D-aminoacyl-tRNA entities in vivo and helps enforce protein L-homochirality. This is D-aminoacyl-tRNA deacylase from Bacteroides thetaiotaomicron (strain ATCC 29148 / DSM 2079 / JCM 5827 / CCUG 10774 / NCTC 10582 / VPI-5482 / E50).